Here is a 368-residue protein sequence, read N- to C-terminus: Probable leucine aminopeptidase ARB_03492 (368 aa).

The N-terminal stretch at 1–18 is a signal peptide; that stretch reads MKVSAIAAVAALAAVAVA. A glycan (N-linked (GlcNAc...) asparagine) is linked at N92. Zn(2+) is bound by residues H172 and D191. N192 and N216 each carry an N-linked (GlcNAc...) asparagine glycan. Residues E230 and D257 each coordinate Zn(2+). A disulfide bridge connects residues C301 and C305. Position 334 (H334) interacts with Zn(2+).

It belongs to the peptidase M28 family. M28E subfamily. In terms of assembly, monomer. Zn(2+) serves as cofactor.

It is found in the secreted. Functionally, probable extracellular aminopeptidase which contributes to pathogenicity. This is Probable leucine aminopeptidase ARB_03492 from Arthroderma benhamiae (strain ATCC MYA-4681 / CBS 112371) (Trichophyton mentagrophytes).